Here is a 225-residue protein sequence, read N- to C-terminus: PKHD-type hydroxylase KPK_3192 (225 aa).

One can recognise a Fe2OG dioxygenase domain in the interval Thr78–Ser177. Residues His96, Asp98, and His158 each coordinate Fe cation. Arg168 serves as a coordination point for 2-oxoglutarate.

Fe(2+) is required as a cofactor. It depends on L-ascorbate as a cofactor.

The sequence is that of PKHD-type hydroxylase KPK_3192 from Klebsiella pneumoniae (strain 342).